A 341-amino-acid chain; its full sequence is S-adenosylmethionine:tRNA ribosyltransferase-isomerase (341 aa).

This sequence belongs to the QueA family. In terms of assembly, monomer.

The protein resides in the cytoplasm. It carries out the reaction 7-aminomethyl-7-carbaguanosine(34) in tRNA + S-adenosyl-L-methionine = epoxyqueuosine(34) in tRNA + adenine + L-methionine + 2 H(+). It participates in tRNA modification; tRNA-queuosine biosynthesis. In terms of biological role, transfers and isomerizes the ribose moiety from AdoMet to the 7-aminomethyl group of 7-deazaguanine (preQ1-tRNA) to give epoxyqueuosine (oQ-tRNA). In Symbiobacterium thermophilum (strain DSM 24528 / JCM 14929 / IAM 14863 / T), this protein is S-adenosylmethionine:tRNA ribosyltransferase-isomerase.